We begin with the raw amino-acid sequence, 149 residues long: MHCPFCSENDTKVIDSRLVADGHQVRRRRQCLACSERFTTFETAELVMPKVIKSNGNREPFDEDKMVGGIQRALEKRPVSADSIELAISMIKSQLRATGEREVPSQMIGNLVMDQLKELDKVAYIRFASVYRSFEDIREFGEEIARLED.

A zinc finger spans residues 3 to 34 (CPFCSENDTKVIDSRLVADGHQVRRRRQCLAC). Positions 49–139 (PKVIKSNGNR…VYRSFEDIRE (91 aa)) constitute an ATP-cone domain.

The protein belongs to the NrdR family. Zn(2+) is required as a cofactor.

Its function is as follows. Negatively regulates transcription of bacterial ribonucleotide reductase nrd genes and operons by binding to NrdR-boxes. The sequence is that of Transcriptional repressor NrdR from Vibrio parahaemolyticus serotype O3:K6 (strain RIMD 2210633).